The primary structure comprises 192 residues: MASNRCAVCKILNETCAPMCIYAPHFPSNDASFKVIIQIFGAVNVCNILDNLEFPEQREIAANCLRYAAEARIRNPISGCHDMILQYKNILNNVEQDIESAVNELGTYVGHDQVPKFYDLPMPDDFLMTPVSLDSFIAKIKSLNEVQKNQLMQLPTAADNAPMIMNSIFGKMEDKNLKDGHRADGASTSAGK.

Residues 4-105 form the LOB domain; that stretch reads NRCAVCKILN…QDIESAVNEL (102 aa).

Belongs to the LOB domain-containing protein family.

This chain is LOB domain-containing protein 32 (LBD32), found in Arabidopsis thaliana (Mouse-ear cress).